Here is a 180-residue protein sequence, read N- to C-terminus: Cytokinin-beta-glucosidase 4 (180 aa).

Its function is as follows. Hydrolyzes cytokinin glucosides thus liberating free cytokinins. The chain is Cytokinin-beta-glucosidase 4 (ROLC4) from Panax ginseng (Korean ginseng).